A 148-amino-acid polypeptide reads, in one-letter code: Putative nickel-responsive regulator (148 aa).

His-88, His-99, His-101, and Cys-107 together coordinate Ni(2+).

It belongs to the transcriptional regulatory CopG/NikR family. It depends on Ni(2+) as a cofactor.

Its function is as follows. Transcriptional regulator. The sequence is that of Putative nickel-responsive regulator from Helicobacter pylori (strain G27).